Consider the following 393-residue polypeptide: S-adenosylmethionine synthase 2 (393 aa).

Glutamate 9 serves as a coordination point for Mg(2+). Residue histidine 15 participates in ATP binding. Residue glutamate 43 coordinates K(+). Glutamate 56 and glutamine 99 together coordinate L-methionine. Residues 167–169 (DGK), 235–238 (SGRF), aspartate 246, 252–253 (RK), alanine 269, lysine 273, and lysine 277 contribute to the ATP site. Aspartate 246 is a binding site for L-methionine. L-methionine is bound at residue lysine 277.

The protein belongs to the AdoMet synthase family. Homotetramer. Interacts with GRF3. Requires Mn(2+) as cofactor. Mg(2+) is required as a cofactor. Co(2+) serves as cofactor. It depends on K(+) as a cofactor. Highly expressed in stems and roots. Detected in trichomes (at the protein level).

The protein localises to the cytoplasm. The catalysed reaction is L-methionine + ATP + H2O = S-adenosyl-L-methionine + phosphate + diphosphate. It participates in amino-acid biosynthesis; S-adenosyl-L-methionine biosynthesis; S-adenosyl-L-methionine from L-methionine: step 1/1. With respect to regulation, inhibited by 5,5'-dithiobis-2-nitrobenzoic acid (DTNB) and N-ethylmaleimide (NEM) (in vitro). In terms of biological role, catalyzes the formation of S-adenosylmethionine from methionine and ATP. The reaction comprises two steps that are both catalyzed by the same enzyme: formation of S-adenosylmethionine (AdoMet) and triphosphate, and subsequent hydrolysis of the triphosphate. In Arabidopsis thaliana (Mouse-ear cress), this protein is S-adenosylmethionine synthase 2 (SAM2).